Here is a 290-residue protein sequence, read N- to C-terminus: Cilia- and flagella-associated protein 298 (290 aa).

Belongs to the CFAP298 family. As to quaternary structure, interacts with dnaaf1/swt. Interacts with lrrc6/sea. Interacts with dvl (via DEP and PDZ domains). As to expression, strongly expressed in ciliated tissues of the embryonic trunk, including the pronephric ducts and spinal canal.

The protein resides in the cytoplasm. It localises to the cytoskeleton. The protein localises to the cilium basal body. Plays a role in motile cilium function, possibly by acting on outer dynein arm assembly. Seems to be important for initiation rather than maintenance of cilium motility. Required for correct positioning of cilia at the apical cell surface, suggesting an additional role in the planar cell polarity (PCP) pathway. May suppress canonical Wnt signaling activity. The protein is Cilia- and flagella-associated protein 298 of Danio rerio (Zebrafish).